Reading from the N-terminus, the 374-residue chain is Alanine racemase (374 aa).

K40 acts as the Proton acceptor; specific for D-alanine in catalysis. Position 40 is an N6-(pyridoxal phosphate)lysine (K40). R139 lines the substrate pocket. Residue Y261 is the Proton acceptor; specific for L-alanine of the active site. M309 contacts substrate.

It belongs to the alanine racemase family. Pyridoxal 5'-phosphate serves as cofactor.

It carries out the reaction L-alanine = D-alanine. The protein operates within amino-acid biosynthesis; D-alanine biosynthesis; D-alanine from L-alanine: step 1/1. Functionally, catalyzes the interconversion of L-alanine and D-alanine. May also act on other amino acids. The protein is Alanine racemase (alr) of Rhodospirillum rubrum (strain ATCC 11170 / ATH 1.1.1 / DSM 467 / LMG 4362 / NCIMB 8255 / S1).